The chain runs to 61 residues: Defensin-like peptide TXKs2 (61 aa).

The signal sequence occupies residues 1–19 (MTYAILIIVSLLLISDRIS). Residues 20 to 22 (NVV) constitute a propeptide that is removed on maturation. Intrachain disulfides connect Cys-26/Cys-47, Cys-33/Cys-56, and Cys-37/Cys-58.

It belongs to the invertebrate defensin family. In terms of tissue distribution, expressed by the venom gland.

The protein resides in the secreted. In terms of biological role, antibacterial protein. The chain is Defensin-like peptide TXKs2 from Olivierus martensii (Manchurian scorpion).